A 917-amino-acid polypeptide reads, in one-letter code: Chitin synthase 1 (917 aa).

A compositionally biased stretch (basic and acidic residues) spans 1-11 (MAYHGRGDGYD). The disordered stretch occupies residues 1–56 (MAYHGRGDGYDGHQLQDLPGGHNQGDQHDDAQAPFLSENPMPYDNDRLGTDTPPVR). The Extracellular portion of the chain corresponds to 1 to 570 (MAYHGRGDGY…YKSGHNIVRM (570 aa)). Residue Asn-544 is glycosylated (N-linked (GlcNAc...) asparagine). The chain crosses the membrane as a helical span at residues 571–591 (FFFHVQLIYNIANVIFTWFSL). The Cytoplasmic segment spans residues 592–629 (ASYWLTTTVIMDLVGTPVTASSSSAEHHGWPFGDTVTP). Residues 630–650 (FFNAVLKYIYLAFVILQFILA) form a helical membrane-spanning segment. At 651-664 (LGNRPKGSKWTYIT) the chain is on the extracellular side. A helical membrane pass occupies residues 665–685 (SFFVFSLIQSYILVLSGYLVA). The Cytoplasmic portion of the chain corresponds to 686 to 716 (RAFSVPLDQQLQLDNAKDAMASLFGGSGSAG). A helical transmembrane segment spans residues 717–737 (VILVALVTIYGLYFLASFMYL). At 738 to 744 (DPWHMFH) the chain is on the extracellular side. A helical transmembrane segment spans residues 745–765 (SFPYYMLLMSTYINILMIYAF). The Cytoplasmic segment spans residues 766-843 (NNWHDVSWGT…DLEDSYKSFR (78 aa)). The helical transmembrane segment at 844–864 (TMLVVSWLFSNCLLAVVITSD) threads the bilayer. Residues 865 to 884 (NFNTFGIGQTASARTAWFFK) lie on the Extracellular side of the membrane. Residues 885–905 (FLLFATGALSVIRFIGFCWFL) form a helical membrane-spanning segment. Residues 906-917 (GRTGIMCCFARR) lie on the Cytoplasmic side of the membrane.

The protein belongs to the chitin synthase family. Class III subfamily.

The protein resides in the cell membrane. The catalysed reaction is [(1-&gt;4)-N-acetyl-beta-D-glucosaminyl](n) + UDP-N-acetyl-alpha-D-glucosamine = [(1-&gt;4)-N-acetyl-beta-D-glucosaminyl](n+1) + UDP + H(+). Functionally, polymerizes chitin, a structural polymer of the cell wall and septum, by transferring the sugar moiety of UDP-GlcNAc to the non-reducing end of the growing chitin polymer. The protein is Chitin synthase 1 (chs-1) of Neurospora crassa (strain ATCC 24698 / 74-OR23-1A / CBS 708.71 / DSM 1257 / FGSC 987).